A 397-amino-acid chain; its full sequence is Acetate kinase 1 (397 aa).

A Mg(2+)-binding site is contributed by Asn8. Lys15 contributes to the ATP binding site. Residue Arg89 coordinates substrate. The Proton donor/acceptor role is filled by Asp146. ATP-binding positions include 206-210 (HLGNG), 281-283 (DFR), and 329-333 (GVGEN). Glu380 is a binding site for Mg(2+).

Belongs to the acetokinase family. Homodimer. Mg(2+) is required as a cofactor. It depends on Mn(2+) as a cofactor.

It is found in the cytoplasm. It catalyses the reaction acetate + ATP = acetyl phosphate + ADP. Its pathway is metabolic intermediate biosynthesis; acetyl-CoA biosynthesis; acetyl-CoA from acetate: step 1/2. Its function is as follows. Catalyzes the formation of acetyl phosphate from acetate and ATP. Can also catalyze the reverse reaction. This Listeria monocytogenes serotype 4b (strain F2365) protein is Acetate kinase 1.